A 491-amino-acid chain; its full sequence is Nicotinamide phosphoribosyltransferase (491 aa).

Position 1 is an N-acetylmethionine (methionine 1). Tyrosine 188 is subject to Phosphotyrosine. Arginine 196 lines the diphosphate pocket. Aspartate 219 contributes to the beta-nicotinamide D-ribonucleotide binding site. Histidine 247 and arginine 311 together coordinate diphosphate. Beta-nicotinamide D-ribonucleotide is bound by residues 311–313, 353–354, glycine 384, and arginine 392; these read RPD and GD. The residue at position 472 (serine 472) is a Phosphoserine.

The protein belongs to the NAPRTase family. In terms of assembly, homodimer. As to expression, expressed in various tissues. At the highest level in liver and at the second highest in heart. The amount is higher in heart than in lung.

It localises to the nucleus. The protein localises to the cytoplasm. The protein resides in the secreted. The catalysed reaction is beta-nicotinamide D-ribonucleotide + diphosphate = 5-phospho-alpha-D-ribose 1-diphosphate + nicotinamide + H(+). Its pathway is cofactor biosynthesis; NAD(+) biosynthesis; nicotinamide D-ribonucleotide from 5-phospho-alpha-D-ribose 1-diphosphate and nicotinamide: step 1/1. Catalyzes the condensation of nicotinamide with 5-phosphoribosyl-1-pyrophosphate to yield nicotinamide mononucleotide, an intermediate in the biosynthesis of NAD. It is the rate limiting component in the mammalian NAD biosynthesis pathway. The secreted form behaves both as a cytokine with immunomodulating properties and an adipokine with anti-diabetic properties, it has no enzymatic activity, partly because of lack of activation by ATP, which has a low level in extracellular space and plasma. Plays a role in the modulation of circadian clock function. NAMPT-dependent oscillatory production of NAD regulates oscillation of clock target gene expression by releasing the core clock component: CLOCK-BMAL1 heterodimer from NAD-dependent SIRT1-mediated suppression. The chain is Nicotinamide phosphoribosyltransferase (Nampt) from Rattus norvegicus (Rat).